The chain runs to 284 residues: Tropomyosin-1 (284 aa).

Disordered regions lie at residues 1–26 (MDAI…DTCE) and 96–124 (EEDL…DENN). The stretch at 1-276 (MDAIKKKMQA…YKSLADEMDS (276 aa)) forms a coiled coil. A compositionally biased stretch (basic and acidic residues) spans 12 to 26 (KLEKDNAMDKADTCE). A compositionally biased stretch (polar residues) spans 107-121 (GTAQQKLLEAQQSAD).

It belongs to the tropomyosin family. In terms of assembly, homodimer.

Functionally, tropomyosin, in association with the troponin complex, plays a central role in the calcium dependent regulation of muscle contraction. The sequence is that of Tropomyosin-1 from Bombyx mori (Silk moth).